The sequence spans 276 residues: uncharacterized protein (276 aa).

One can recognise an AB hydrolase-1 domain in the interval 20–137 (PVLIFIPGAN…PPINTFLPDS (118 aa)). The disordered stretch occupies residues 57–76 (GESELTEPLPDSASNPDSDY).

This sequence belongs to the AB hydrolase superfamily.

This is an uncharacterized protein from Staphylococcus aureus (strain USA300).